Reading from the N-terminus, the 129-residue chain is Short-chain dehydrogenase/reductase homolog YusR (129 aa).

The protein belongs to the short-chain dehydrogenases/reductases (SDR) family.

This chain is Short-chain dehydrogenase/reductase homolog YusR (yusR), found in Bacillus subtilis (strain 168).